The following is a 91-amino-acid chain: Bacterial microcompartment shell vertex protein PduN (91 aa).

The BMV domain occupies 1 to 87 (MHLARVTGAV…IDLAVVGIVD (87 aa)).

The protein belongs to the CcmL/EutN family. In terms of assembly, homopentamer. Interacts with shell protein PduA.

It is found in the bacterial microcompartment. The protein operates within polyol metabolism; 1,2-propanediol degradation. In terms of biological role, probably forms vertices in the shell of the bacterial microcompartment (BMC) dedicated to 1,2-propanediol (1,2-PD) degradation. Required for structural integrity of BMCs and to mitigate propionaldehyde toxicity. Its function is as follows. The 1,2-PD-specific bacterial microcompartment (BMC) concentrates low levels of 1,2-PD catabolic enzymes, concentrates volatile reaction intermediates thus enhancing pathway flux and keeps the level of toxic, mutagenic propionaldehyde low. This chain is Bacterial microcompartment shell vertex protein PduN, found in Salmonella typhimurium (strain LT2 / SGSC1412 / ATCC 700720).